A 352-amino-acid chain; its full sequence is Pejvakin (352 aa).

It belongs to the gasdermin family. In terms of assembly, interacts with MAP1LC3B; interaction is direct. Interacts with IQGAP1. Interacts with ROCK2. Interacts with TRIOBP. In terms of tissue distribution, in ear, it is detected in the organ of Corti and the spiral ganglion within the cochlea in the sensory areas of the vestibule (cristae ampullares of the semicircular ducts, and maculae of the saccule and utricle) and in the first 3 relays (cochlear nuclei, superior olivary complex and inferior colliculus) of the afferent auditory pathway. Detected in hair cells of the cochlea and vestibule but not in neurons. In the afferent auditory pathway, it is present in the cell bodies of neurons but not in fiber bundles such as the trapezoid body in the brainstem. Also detected in spiral ganglion cells, which form the auditory nerve and project to the cochlear nuclei in the brainstem. Also present in the cochlear nuclei, the superior olive and the inferior colliculus (at protein level). Expressed in all the adult organs tested: brain, eye, inner ear, heart, lung, kidney, liver, intestine, testis and weakly in skeletal muscle.

The protein localises to the peroxisome membrane. Its subcellular location is the cell projection. It localises to the cilium. Peroxisome-associated protein required to protect auditory hair cells against noise-induced damage. Acts by regulating noise-induced peroxisome proliferation in auditory hair cells and neurons, and promoting autophagic degradation of damaged peroxisomes (pexophagy). Noise overexposure increases reactive oxygen species (ROS) levels, causing oxidative damage to auditory hair cells and resulting in hearing loss. PJVK acts as a ROS sensor that recruits the autophagy machinery to trigger pexophagy of peroxisomes damaged by oxidative stress. In addition to pexophagy, also required to promote peroxisome proliferation in response to sound overstimulation. This chain is Pejvakin, found in Mus musculus (Mouse).